The sequence spans 206 residues: U-scoloptoxin(08)-Cw1a (206 aa).

An N-terminal signal peptide occupies residues 1–24 (MIFRVNLLFSCFCFVLFVFDFSNA). A propeptide spanning residues 25–164 (SKYDQGSLNI…DLPELKRRKR (140 aa)) is cleaved from the precursor. The RLWRNWE 1; approximate repeat unit spans residues 37-43 (RLWRDWE). The stretch at 71–77 (RLWRDWE) is one RLWRNWE 2; approximate repeat. The stretch at 104–110 (RLWRDWE) is one RLWRNWE 3; approximate repeat. The stretch at 137–143 (RLWRNWE) is one RLWRNWE 4 repeat. Residues 164–170 (RLWRNED) form an RLWRNWE 5; approximate repeat.

This sequence belongs to the scoloptoxin-08 family. Post-translationally, contains 3 disulfide bonds. In terms of tissue distribution, expressed by the venom gland.

It localises to the secreted. The chain is U-scoloptoxin(08)-Cw1a from Cormocephalus westwoodi (Westwood's green centipede).